Reading from the N-terminus, the 234-residue chain is Small ribosomal subunit protein uS10m (234 aa).

The transit peptide at 1-23 (MLRIGYRGFSTRSRVFKLSPQEY) directs the protein to the mitochondrion.

This sequence belongs to the universal ribosomal protein uS10 family. Component of the mitochondrial small ribosomal subunit (mt-SSU).

The protein localises to the mitochondrion. In terms of biological role, component of the mitochondrial ribosome (mitoribosome), a dedicated translation machinery responsible for the synthesis of mitochondrial genome-encoded proteins, including at least some of the essential transmembrane subunits of the mitochondrial respiratory chain. The mitoribosomes are attached to the mitochondrial inner membrane and translation products are cotranslationally integrated into the membrane. This chain is Small ribosomal subunit protein uS10m (RSM10), found in Candida albicans (strain SC5314 / ATCC MYA-2876) (Yeast).